The sequence spans 292 residues: Alpha-soluble NSF attachment protein (292 aa).

An N-acetylserine modification is found at S2. A Glycyl lysine isopeptide (Lys-Gly) (interchain with G-Cter in ubiquitin) cross-link involves residue K261.

Belongs to the SNAP family. In terms of assembly, binds to vacuolar cis-SNARE complexes composed of the v-SNAREs NYV1, VTI1 and YKT6, and the t-SNAREs VAM3 and VAM7. Interacts with SEC18.

It localises to the membrane. Its function is as follows. SNARE complex protein that binds to cis-SNARE complexes on membranes and is required for vesicular transport between the endoplasmic reticulum and the Golgi apparatus and for homotypic vacuole fusion. During the priming step of membrane fusion, is released from cis-SNARE complexes by SEC18 to establish a pool of unpaired SNAREs, which are required for interactions in trans during docking and fusion steps. Can displace HOPS from SNARE complexes, which may be a prerequisite for trans-SNARE complex disassembly and subsequent rounds of priming, docking and fusion. The sequence is that of Alpha-soluble NSF attachment protein (SEC17) from Saccharomyces cerevisiae (strain ATCC 204508 / S288c) (Baker's yeast).